The chain runs to 99 residues: DNA-directed RNA polymerase subunit omega (99 aa).

Low complexity predominate over residues methionine 1 to alanine 10. Residues methionine 1–threonine 20 form a disordered region.

Belongs to the RNA polymerase subunit omega family. As to quaternary structure, the RNAP catalytic core consists of 2 alpha, 1 beta, 1 beta' and 1 omega subunit. When a sigma factor is associated with the core the holoenzyme is formed, which can initiate transcription.

The enzyme catalyses RNA(n) + a ribonucleoside 5'-triphosphate = RNA(n+1) + diphosphate. Functionally, promotes RNA polymerase assembly. Latches the N- and C-terminal regions of the beta' subunit thereby facilitating its interaction with the beta and alpha subunits. This Rhodococcus erythropolis (strain PR4 / NBRC 100887) protein is DNA-directed RNA polymerase subunit omega.